A 406-amino-acid chain; its full sequence is NADH-ubiquinone oxidoreductase 49 kDa subunit (406 aa).

The protein belongs to the complex I 49 kDa subunit family. In terms of assembly, complex I is composed of 45 different subunits. Component of the iron-sulfur (IP) fragment of the enzyme.

The protein resides in the mitochondrion inner membrane. The enzyme catalyses a ubiquinone + NADH + 5 H(+)(in) = a ubiquinol + NAD(+) + 4 H(+)(out). Core subunit of the mitochondrial membrane respiratory chain NADH dehydrogenase (Complex I) that is believed to belong to the minimal assembly required for catalysis. Complex I functions in the transfer of electrons from NADH to the respiratory chain. The immediate electron acceptor for the enzyme is believed to be ubiquinone. The chain is NADH-ubiquinone oxidoreductase 49 kDa subunit (nad7) from Dictyostelium citrinum (Slime mold).